We begin with the raw amino-acid sequence, 1297 residues long: Regulator of V-ATPase in vacuolar membrane protein 1 (1297 aa).

Basic and acidic residues-rich tracts occupy residues 1161–1171 and 1260–1269; these read DQEIHENKDSQ and AVEKTHDSPK. 2 disordered regions span residues 1161–1182 and 1260–1297; these read DQEIHENKDSQRNSTNEPVRNK and AVEKTHDSPKLGKTLMGQDIRPTPDDVPEFNESAFSFE.

Component of the RAVE complex composed of rav1, rav2 and skp1. Interacts with vam2.

The protein localises to the cytoplasm. It is found in the nucleus. It localises to the endomembrane system. Its function is as follows. Component of the RAVE complex which is required for stable assembly of the vacuolar ATPase complex V-ATPase. The chain is Regulator of V-ATPase in vacuolar membrane protein 1 (rav1) from Schizosaccharomyces pombe (strain 972 / ATCC 24843) (Fission yeast).